A 101-amino-acid polypeptide reads, in one-letter code: Small ribosomal subunit protein uS14 (101 aa).

The interval 1–21 (MAKTSSVEKNNRRRKLADQYG) is disordered.

The protein belongs to the universal ribosomal protein uS14 family. As to quaternary structure, part of the 30S ribosomal subunit. Contacts proteins S3 and S10.

Its function is as follows. Binds 16S rRNA, required for the assembly of 30S particles and may also be responsible for determining the conformation of the 16S rRNA at the A site. This Mesorhizobium japonicum (strain LMG 29417 / CECT 9101 / MAFF 303099) (Mesorhizobium loti (strain MAFF 303099)) protein is Small ribosomal subunit protein uS14.